The following is a 470-amino-acid chain: Glutamate--tRNA ligase 1 (470 aa).

Positions 15-25 (PSPTGTMHIGT) match the 'HIGH' region motif. The 'KMSKS' region motif lies at 241–245 (KLSKR). Lysine 244 serves as a coordination point for ATP.

The protein belongs to the class-I aminoacyl-tRNA synthetase family. Glutamate--tRNA ligase type 1 subfamily. As to quaternary structure, monomer.

It is found in the cytoplasm. It catalyses the reaction tRNA(Glu) + L-glutamate + ATP = L-glutamyl-tRNA(Glu) + AMP + diphosphate. In terms of biological role, catalyzes the attachment of glutamate to tRNA(Glu) in a two-step reaction: glutamate is first activated by ATP to form Glu-AMP and then transferred to the acceptor end of tRNA(Glu). This Jannaschia sp. (strain CCS1) protein is Glutamate--tRNA ligase 1.